We begin with the raw amino-acid sequence, 290 residues long: Glycine--tRNA ligase alpha subunit (290 aa).

Belongs to the class-II aminoacyl-tRNA synthetase family. As to quaternary structure, tetramer of two alpha and two beta subunits.

Its subcellular location is the cytoplasm. It catalyses the reaction tRNA(Gly) + glycine + ATP = glycyl-tRNA(Gly) + AMP + diphosphate. The protein is Glycine--tRNA ligase alpha subunit of Synechococcus sp. (strain CC9902).